Here is a 139-residue protein sequence, read N- to C-terminus: Aspartate 1-decarboxylase (139 aa).

The active-site Schiff-base intermediate with substrate; via pyruvic acid is Ser-25. Residue Ser-25 is modified to Pyruvic acid (Ser). Thr-57 contributes to the substrate binding site. The active-site Proton donor is Tyr-58. A substrate-binding site is contributed by 73 to 75; the sequence is GAA.

Belongs to the PanD family. As to quaternary structure, heterooctamer of four alpha and four beta subunits. Requires pyruvate as cofactor. In terms of processing, is synthesized initially as an inactive proenzyme, which is activated by self-cleavage at a specific serine bond to produce a beta-subunit with a hydroxyl group at its C-terminus and an alpha-subunit with a pyruvoyl group at its N-terminus.

The protein resides in the cytoplasm. The catalysed reaction is L-aspartate + H(+) = beta-alanine + CO2. Its pathway is cofactor biosynthesis; (R)-pantothenate biosynthesis; beta-alanine from L-aspartate: step 1/1. Functionally, catalyzes the pyruvoyl-dependent decarboxylation of aspartate to produce beta-alanine. The protein is Aspartate 1-decarboxylase of Mycobacterium bovis (strain BCG / Tokyo 172 / ATCC 35737 / TMC 1019).